A 500-amino-acid chain; its full sequence is Glycerol kinase (500 aa).

T12 is an ADP binding site. Residues T12, T13, and S14 each contribute to the ATP site. T12 contacts sn-glycerol 3-phosphate. R16 serves as a coordination point for ADP. 4 residues coordinate sn-glycerol 3-phosphate: R82, E83, Y134, and D246. Residues R82, E83, Y134, D246, and Q247 each coordinate glycerol. ADP-binding residues include T268 and G312. ATP is bound by residues T268, G312, Q316, and G413. ADP contacts are provided by G413 and N417.

The protein belongs to the FGGY kinase family.

The catalysed reaction is glycerol + ATP = sn-glycerol 3-phosphate + ADP + H(+). Its pathway is polyol metabolism; glycerol degradation via glycerol kinase pathway; sn-glycerol 3-phosphate from glycerol: step 1/1. Its activity is regulated as follows. Inhibited by fructose 1,6-bisphosphate (FBP). In terms of biological role, key enzyme in the regulation of glycerol uptake and metabolism. Catalyzes the phosphorylation of glycerol to yield sn-glycerol 3-phosphate. In Saccharopolyspora erythraea (strain ATCC 11635 / DSM 40517 / JCM 4748 / NBRC 13426 / NCIMB 8594 / NRRL 2338), this protein is Glycerol kinase.